Here is a 185-residue protein sequence, read N- to C-terminus: Ribosome-recycling factor (185 aa).

This sequence belongs to the RRF family.

Its subcellular location is the cytoplasm. Its function is as follows. Responsible for the release of ribosomes from messenger RNA at the termination of protein biosynthesis. May increase the efficiency of translation by recycling ribosomes from one round of translation to another. In Mycolicibacterium vanbaalenii (strain DSM 7251 / JCM 13017 / BCRC 16820 / KCTC 9966 / NRRL B-24157 / PYR-1) (Mycobacterium vanbaalenii), this protein is Ribosome-recycling factor.